We begin with the raw amino-acid sequence, 127 residues long: Holo-[acyl-carrier-protein] synthase (127 aa).

Mg(2+) is bound by residues Asp-9 and Glu-58.

Belongs to the P-Pant transferase superfamily. AcpS family. It depends on Mg(2+) as a cofactor.

The protein resides in the cytoplasm. The enzyme catalyses apo-[ACP] + CoA = holo-[ACP] + adenosine 3',5'-bisphosphate + H(+). In terms of biological role, transfers the 4'-phosphopantetheine moiety from coenzyme A to a Ser of acyl-carrier-protein. This chain is Holo-[acyl-carrier-protein] synthase, found in Shewanella baltica (strain OS223).